A 338-amino-acid chain; its full sequence is Serpentine receptor class alpha-32 (338 aa).

A run of 7 helical transmembrane segments spans residues 30–50 (VYVI…IHAI), 63–83 (ITHL…SYTI), 120–140 (RFLF…VILF), 152–172 (GEIL…LLHL), 199–219 (LTSY…MMWY), 249–269 (LNSL…FVLA), and 289–309 (TTPY…QWIG).

It belongs to the nematode receptor-like protein sra family.

It localises to the membrane. The polypeptide is Serpentine receptor class alpha-32 (sra-32) (Caenorhabditis elegans).